Reading from the N-terminus, the 563-residue chain is Germacrene-A synthase (563 aa).

The Mg(2+) site is built by Asp-316, Asp-320, Asp-460, Thr-464, and Glu-468. Positions 316–320 (DDTYD) match the DDXXD motif motif.

It belongs to the terpene synthase family. Tpsa subfamily. It depends on Mg(2+) as a cofactor. The cofactor is Mn(2+). In terms of tissue distribution, high expression in disk florets, moderate expression in ray florets and detected in leaves and stems, but not in roots.

The catalysed reaction is (2E,6E)-farnesyl diphosphate = (+)-(R)-germacrene A + diphosphate. It functions in the pathway secondary metabolite biosynthesis; terpenoid biosynthesis. Sesquiterpene synthase involved in germacrene A biosynthesis. May be involved in the biosynthesis of the sesquiterpene lactone matricine, one of the major active compounds of chamomile flowers. This Matricaria chamomilla var. recutita (German chamomile) protein is Germacrene-A synthase.